An 873-amino-acid polypeptide reads, in one-letter code: Polyribonucleotide nucleotidyltransferase (873 aa).

2 residues coordinate Mg(2+): Asp521 and Asp527. The region spanning 587 to 646 is the KH domain; it reads PRIITTTVPVDKIGEVIGPKGKMINQIQEDTGAEIAIEDDGTVYISSEGGEAAEKAKQII. The S1 motif domain maps to 658 to 730; that stretch reads GETYKGTVVK…DRGKISLAIP (73 aa). Positions 727-873 are disordered; sequence LAIPGFENQE…VRRDFDPFDD (147 aa). Residues 742–857 show a composition bias toward basic and acidic residues; the sequence is RRSDDRPRRD…EYREGREVRH (116 aa).

The protein belongs to the polyribonucleotide nucleotidyltransferase family. It depends on Mg(2+) as a cofactor.

The protein resides in the cytoplasm. It carries out the reaction RNA(n+1) + phosphate = RNA(n) + a ribonucleoside 5'-diphosphate. Its function is as follows. Involved in mRNA degradation. Catalyzes the phosphorolysis of single-stranded polyribonucleotides processively in the 3'- to 5'-direction. This is Polyribonucleotide nucleotidyltransferase from Bifidobacterium animalis subsp. lactis (strain AD011).